A 202-amino-acid polypeptide reads, in one-letter code: Proteasome subunit beta 1 (202 aa).

A propeptide (removed in mature form; by autocatalysis) is located at residue Met1. Catalysis depends on Thr2, which acts as the Nucleophile.

The protein belongs to the peptidase T1B family. In terms of assembly, the 20S proteasome core is composed of 14 alpha and 14 beta subunits that assemble into four stacked heptameric rings, resulting in a barrel-shaped structure. The two inner rings, each composed of seven catalytic beta subunits, are sandwiched by two outer rings, each composed of seven alpha subunits. The catalytic chamber with the active sites is on the inside of the barrel. Has a gated structure, the ends of the cylinder being occluded by the N-termini of the alpha-subunits. Is capped at one or both ends by the proteasome regulatory ATPase, PAN.

Its subcellular location is the cytoplasm. The enzyme catalyses Cleavage of peptide bonds with very broad specificity.. Its activity is regulated as follows. The formation of the proteasomal ATPase PAN-20S proteasome complex, via the docking of the C-termini of PAN into the intersubunit pockets in the alpha-rings, triggers opening of the gate for substrate entry. Interconversion between the open-gate and close-gate conformations leads to a dynamic regulation of the 20S proteasome proteolysis activity. In terms of biological role, component of the proteasome core, a large protease complex with broad specificity involved in protein degradation. The chain is Proteasome subunit beta 1 from Pyrobaculum aerophilum (strain ATCC 51768 / DSM 7523 / JCM 9630 / CIP 104966 / NBRC 100827 / IM2).